A 217-amino-acid chain; its full sequence is tRNA (guanine-N(7)-)-methyltransferase (217 aa).

Positions 44, 69, 96, and 118 each coordinate S-adenosyl-L-methionine. Residue Asp-118 is part of the active site. Residues Lys-122, Asp-154, and 191-194 contribute to the substrate site; that span reads TEYE.

This sequence belongs to the class I-like SAM-binding methyltransferase superfamily. TrmB family.

It carries out the reaction guanosine(46) in tRNA + S-adenosyl-L-methionine = N(7)-methylguanosine(46) in tRNA + S-adenosyl-L-homocysteine. The protein operates within tRNA modification; N(7)-methylguanine-tRNA biosynthesis. In terms of biological role, catalyzes the formation of N(7)-methylguanine at position 46 (m7G46) in tRNA. The protein is tRNA (guanine-N(7)-)-methyltransferase of Bacillus mycoides (strain KBAB4) (Bacillus weihenstephanensis).